Consider the following 148-residue polypeptide: Macrodomain Ter protein (148 aa).

Belongs to the MatP family. Homodimer.

Its subcellular location is the cytoplasm. In terms of biological role, required for spatial organization of the terminus region of the chromosome (Ter macrodomain) during the cell cycle. Prevents early segregation of duplicated Ter macrodomains during cell division. Binds specifically to matS, which is a 13 bp signature motif repeated within the Ter macrodomain. The sequence is that of Macrodomain Ter protein from Aliivibrio salmonicida (strain LFI1238) (Vibrio salmonicida (strain LFI1238)).